We begin with the raw amino-acid sequence, 831 residues long: Maltodextrin phosphorylase (831 aa).

Lysine 592 is subject to N6-(pyridoxal phosphate)lysine.

Belongs to the glycogen phosphorylase family. Trimer (at 25 degrees Celsius). The cofactor is pyridoxal 5'-phosphate.

It catalyses the reaction [(1-&gt;4)-alpha-D-glucosyl](n) + phosphate = [(1-&gt;4)-alpha-D-glucosyl](n-1) + alpha-D-glucose 1-phosphate. Its function is as follows. Phosphorylase is an important allosteric enzyme in carbohydrate metabolism. Catalyzes the phospholytic cleavage of maltodextrins with a minimal chain length of five glucose residues to yield glucose-1-phosphate. Low activity with tetraose and no activity with triose and maltose. Long maltodextrins (8 to 15 glucose units), amylose and starch are not as good substrates as maltoheptaose. This chain is Maltodextrin phosphorylase (malP), found in Thermococcus litoralis (strain ATCC 51850 / DSM 5473 / JCM 8560 / NS-C).